The primary structure comprises 352 residues: Probable protein kinase DDB_G0291842 (352 aa).

A disordered region spans residues 1–57; the sequence is MRPLPDQSAFEDKSELVSKKQKNEDENNENRSPETPRTPKVCPKTPTKTPLRTPTKN. Residues 10 to 34 show a composition bias toward basic and acidic residues; it reads FEDKSELVSKKQKNEDENNENRSPE. Residues 38–56 are compositionally biased toward low complexity; the sequence is TPKVCPKTPTKTPLRTPTK. The 255-residue stretch at 77–331 folds into the Protein kinase domain; it reads FEYINQIGEG…IQSLLKYDKL (255 aa). ATP-binding positions include 83 to 91 and lysine 106; that span reads IGEGSFAKV. Residue aspartate 207 is the Proton acceptor of the active site. Residues asparagine 212 and aspartate 225 each contribute to the Mg(2+) site.

This sequence belongs to the protein kinase superfamily. Ser/Thr protein kinase family. WEE1 subfamily.

It catalyses the reaction L-seryl-[protein] + ATP = O-phospho-L-seryl-[protein] + ADP + H(+). It carries out the reaction L-threonyl-[protein] + ATP = O-phospho-L-threonyl-[protein] + ADP + H(+). This is Probable protein kinase DDB_G0291842 from Dictyostelium discoideum (Social amoeba).